A 441-amino-acid chain; its full sequence is S-adenosylmethionine synthase 1 (441 aa).

Mg(2+) is bound at residue Glu9. His15 serves as a coordination point for ATP. Glu43 provides a ligand contact to K(+). The L-methionine site is built by Glu56 and Gln99. ATP is bound by residues 167 to 169 (DGK), 235 to 238 (SGRF), Asp246, 252 to 253 (RK), Ala269, Lys273, and Lys277. Asp246 provides a ligand contact to L-methionine. An L-methionine-binding site is contributed by Lys277.

The protein belongs to the AdoMet synthase family. In terms of assembly, homotetramer. Requires Mn(2+) as cofactor. Mg(2+) serves as cofactor. It depends on Co(2+) as a cofactor. K(+) is required as a cofactor.

Its subcellular location is the cytoplasm. The catalysed reaction is L-methionine + ATP + H2O = S-adenosyl-L-methionine + phosphate + diphosphate. It functions in the pathway amino-acid biosynthesis; S-adenosyl-L-methionine biosynthesis; S-adenosyl-L-methionine from L-methionine: step 1/1. Its function is as follows. Catalyzes the formation of S-adenosylmethionine from methionine and ATP. The reaction comprises two steps that are both catalyzed by the same enzyme: formation of S-adenosylmethionine (AdoMet) and triphosphate, and subsequent hydrolysis of the triphosphate. This chain is S-adenosylmethionine synthase 1 (SAMS1), found in Daucus carota (Wild carrot).